A 466-amino-acid chain; its full sequence is UDP-N-acetylmuramate--L-alanine ligase (466 aa).

Position 119-125 (119-125 (GTHGKTT)) interacts with ATP.

It belongs to the MurCDEF family.

Its subcellular location is the cytoplasm. It catalyses the reaction UDP-N-acetyl-alpha-D-muramate + L-alanine + ATP = UDP-N-acetyl-alpha-D-muramoyl-L-alanine + ADP + phosphate + H(+). It participates in cell wall biogenesis; peptidoglycan biosynthesis. Its function is as follows. Cell wall formation. The chain is UDP-N-acetylmuramate--L-alanine ligase from Cytophaga hutchinsonii (strain ATCC 33406 / DSM 1761 / CIP 103989 / NBRC 15051 / NCIMB 9469 / D465).